The primary structure comprises 226 residues: Aspartyl protease inhibitor (226 aa).

Residues 1 to 15 (MKLLFLCALIALTAA) form the signal peptide. Disordered regions lie at residues 95–116 (GKKGKAVETSSEELPKAPKKPS) and 196–218 (EAKQTTTTEAPELPEEAPEQPNV). The cysteines at positions 131 and 222 are disulfide-linked.

It belongs to the protease inhibitor I33 family.

It localises to the secreted. Its function is as follows. Aspartyl protease inhibitor. This is Aspartyl protease inhibitor from Parelaphostrongylus tenuis (Meningeal worm).